The chain runs to 238 residues: Ribonuclease PH (238 aa).

Phosphate contacts are provided by residues arginine 87 and 125-127 (GTR).

It belongs to the RNase PH family. As to quaternary structure, homohexameric ring arranged as a trimer of dimers.

The catalysed reaction is tRNA(n+1) + phosphate = tRNA(n) + a ribonucleoside 5'-diphosphate. Its function is as follows. Phosphorolytic 3'-5' exoribonuclease that plays an important role in tRNA 3'-end maturation. Removes nucleotide residues following the 3'-CCA terminus of tRNAs; can also add nucleotides to the ends of RNA molecules by using nucleoside diphosphates as substrates, but this may not be physiologically important. Probably plays a role in initiation of 16S rRNA degradation (leading to ribosome degradation) during starvation. The chain is Ribonuclease PH from Synechococcus elongatus (strain ATCC 33912 / PCC 7942 / FACHB-805) (Anacystis nidulans R2).